We begin with the raw amino-acid sequence, 293 residues long: Pantothenate synthetase (293 aa).

30-37 lines the ATP pocket; the sequence is MGYLHKGH. Histidine 37 acts as the Proton donor in catalysis. Glutamine 61 serves as a coordination point for (R)-pantoate. Glutamine 61 contributes to the beta-alanine binding site. 147 to 150 lines the ATP pocket; sequence GEKD. Glutamine 153 is a binding site for (R)-pantoate. ATP is bound by residues valine 176 and 184-187; that span reads CSSR.

This sequence belongs to the pantothenate synthetase family. Homodimer.

It localises to the cytoplasm. The catalysed reaction is (R)-pantoate + beta-alanine + ATP = (R)-pantothenate + AMP + diphosphate + H(+). The protein operates within cofactor biosynthesis; (R)-pantothenate biosynthesis; (R)-pantothenate from (R)-pantoate and beta-alanine: step 1/1. In terms of biological role, catalyzes the condensation of pantoate with beta-alanine in an ATP-dependent reaction via a pantoyl-adenylate intermediate. The protein is Pantothenate synthetase of Brucella canis (strain ATCC 23365 / NCTC 10854 / RM-666).